The following is a 523-amino-acid chain: Putative glycerol-3-phosphate transporter 1 (523 aa).

Transmembrane regions (helical) follow at residues 29-49 (LSYSAYQAIVLIVTFLAYASY), 102-122 (VLLGEIDVAFLAVYAFGMYFA), 133-153 (IFLTVGMIGTGLFTSLFGVGY), 163-183 (FLIMQMLAGLFQSSGWPSVVA), 196-216 (LIMGIWNAHTSVGNITGSLIA), 228-248 (FVVPGVIIVVIGLVNYAFLPV), 306-326 (FALCLFFAKLVAYTFLYWLPF), 344-364 (GNLSTMFDVGGVVGGIMAGYI), 368-388 (IGARAITAASFMYCSIPALFF), 402-422 (SLMFLTGMLVNGPYALITTAV), 444-464 (AIIDGTGSVGAAVGPLLTGYI), and 468-488 (GSWTAVFTMLMGAAFVAGLLL).

This sequence belongs to the major facilitator superfamily. Organophosphate:Pi antiporter (OPA) (TC 2.A.1.4) family.

The protein resides in the membrane. In Arabidopsis thaliana (Mouse-ear cress), this protein is Putative glycerol-3-phosphate transporter 1.